The primary structure comprises 485 residues: Peptidyl-prolyl cis-trans isomerase-like 4 (485 aa).

One can recognise a PPIase cyclophilin-type domain in the interval 1 to 172 (MSVLLETSAG…IDIRIKHTVI (172 aa)). Residues 251–329 (NVLFVCKLNP…RRIHVDFSQS (79 aa)) form the RRM domain. The disordered stretch occupies residues 377 to 485 (NYRMVYGEEE…RDENDRRSRR (109 aa)). The segment covering 426–485 (RPRDRSRDRYHKPRDDRRGDRRDRDRRDQDRNRYRDRDHRDRGREKDRYGRDENDRRSRR) has biased composition (basic and acidic residues).

This sequence belongs to the cyclophilin-type PPIase family. PPIL4 subfamily.

It is found in the nucleus. It carries out the reaction [protein]-peptidylproline (omega=180) = [protein]-peptidylproline (omega=0). Its function is as follows. PPIases accelerate the folding of proteins. It catalyzes the cis-trans isomerization of proline imidic peptide bonds in oligopeptides. This is Peptidyl-prolyl cis-trans isomerase-like 4 (CYP6) from Gibberella zeae (strain ATCC MYA-4620 / CBS 123657 / FGSC 9075 / NRRL 31084 / PH-1) (Wheat head blight fungus).